Consider the following 202-residue polypeptide: LexA repressor (202 aa).

A DNA-binding region (H-T-H motif) is located at residues 28–48 (RAEIAQRLGFRSPNAAEEHLK). Catalysis depends on for autocatalytic cleavage activity residues Ser-119 and Lys-156.

It belongs to the peptidase S24 family. In terms of assembly, homodimer.

The enzyme catalyses Hydrolysis of Ala-|-Gly bond in repressor LexA.. In terms of biological role, represses a number of genes involved in the response to DNA damage (SOS response), including recA and lexA. Binds to the 16 bp palindromic sequence 5'-CTGTATATATATACAG-3'. In the presence of single-stranded DNA, RecA interacts with LexA causing an autocatalytic cleavage which disrupts the DNA-binding part of LexA, leading to derepression of the SOS regulon and eventually DNA repair. The protein is LexA repressor of Salmonella agona (strain SL483).